The chain runs to 27 residues: Conotoxin Lo6/7b (27 aa).

3 cysteine pairs are disulfide-bonded: cysteine 2/cysteine 16, cysteine 9/cysteine 19, and cysteine 15/cysteine 26. Tyrosine 27 carries the tyrosine amide modification.

As to expression, expressed by the venom duct.

It localises to the secreted. In terms of biological role, 1 uM of this toxin does not show any effect on voltage-gated sodium and potassium channels. Does not show antibacterial activity on both Gram-negative and Gram-positive bacteria. This Conasprella longurionis (Cone snail) protein is Conotoxin Lo6/7b.